The following is a 721-amino-acid chain: Catalase-peroxidase 1 (721 aa).

A cross-link (tryptophyl-tyrosyl-methioninium (Trp-Tyr) (with M-249)) is located at residues 98–223 (WHAAGSYRVA…LAAVQMGLIY (126 aa)). Residue histidine 99 is the Proton acceptor of the active site. Residues 223–249 (YVNPEGVNGQPDPLRTAQDVRVTFGRM) constitute a cross-link (tryptophyl-tyrosyl-methioninium (Tyr-Met) (with W-98)). Histidine 264 is a binding site for heme b.

This sequence belongs to the peroxidase family. Peroxidase/catalase subfamily. Homodimer or homotetramer. The cofactor is heme b. Formation of the three residue Trp-Tyr-Met cross-link is important for the catalase, but not the peroxidase activity of the enzyme.

The enzyme catalyses H2O2 + AH2 = A + 2 H2O. It catalyses the reaction 2 H2O2 = O2 + 2 H2O. Bifunctional enzyme with both catalase and broad-spectrum peroxidase activity. This Legionella pneumophila subsp. pneumophila (strain Philadelphia 1 / ATCC 33152 / DSM 7513) protein is Catalase-peroxidase 1.